The primary structure comprises 309 residues: Ribonuclease Z (309 aa).

Positions 63, 65, 67, 68, 141, 212, and 270 each coordinate Zn(2+). The Proton acceptor role is filled by Asp67.

Belongs to the RNase Z family. As to quaternary structure, homodimer. The cofactor is Zn(2+).

It catalyses the reaction Endonucleolytic cleavage of RNA, removing extra 3' nucleotides from tRNA precursor, generating 3' termini of tRNAs. A 3'-hydroxy group is left at the tRNA terminus and a 5'-phosphoryl group is left at the trailer molecule.. Functionally, zinc phosphodiesterase, which displays some tRNA 3'-processing endonuclease activity. Probably involved in tRNA maturation, by removing a 3'-trailer from precursor tRNA. This Lactobacillus gasseri (strain ATCC 33323 / DSM 20243 / BCRC 14619 / CIP 102991 / JCM 1131 / KCTC 3163 / NCIMB 11718 / NCTC 13722 / AM63) protein is Ribonuclease Z.